The chain runs to 249 residues: Vitamin B12 import ATP-binding protein BtuD (249 aa).

One can recognise an ABC transporter domain in the interval 1-233 (MSIVMQLQDV…PNLAQAYGMN (233 aa)). 33-40 (GPNGAGKS) lines the ATP pocket.

This sequence belongs to the ABC transporter superfamily. Vitamin B12 importer (TC 3.A.1.13.1) family. As to quaternary structure, the complex is composed of two ATP-binding proteins (BtuD), two transmembrane proteins (BtuC) and a solute-binding protein (BtuF).

Its subcellular location is the cell inner membrane. The catalysed reaction is an R-cob(III)alamin(out) + ATP + H2O = an R-cob(III)alamin(in) + ADP + phosphate + H(+). Its function is as follows. Part of the ABC transporter complex BtuCDF involved in vitamin B12 import. Responsible for energy coupling to the transport system. The chain is Vitamin B12 import ATP-binding protein BtuD from Escherichia coli (strain K12 / DH10B).